A 232-amino-acid chain; its full sequence is 2-C-methyl-D-erythritol 4-phosphate cytidylyltransferase (232 aa).

Belongs to the IspD/TarI cytidylyltransferase family. IspD subfamily.

It carries out the reaction 2-C-methyl-D-erythritol 4-phosphate + CTP + H(+) = 4-CDP-2-C-methyl-D-erythritol + diphosphate. It participates in isoprenoid biosynthesis; isopentenyl diphosphate biosynthesis via DXP pathway; isopentenyl diphosphate from 1-deoxy-D-xylulose 5-phosphate: step 2/6. Functionally, catalyzes the formation of 4-diphosphocytidyl-2-C-methyl-D-erythritol from CTP and 2-C-methyl-D-erythritol 4-phosphate (MEP). This Synechococcus elongatus (strain ATCC 33912 / PCC 7942 / FACHB-805) (Anacystis nidulans R2) protein is 2-C-methyl-D-erythritol 4-phosphate cytidylyltransferase.